We begin with the raw amino-acid sequence, 83 residues long: Cytochrome b559 subunit alpha (83 aa).

A helical transmembrane segment spans residues V21–W35. Residue H23 participates in heme binding.

The protein belongs to the PsbE/PsbF family. In terms of assembly, heterodimer of an alpha subunit and a beta subunit. PSII is composed of 1 copy each of membrane proteins PsbA, PsbB, PsbC, PsbD, PsbE, PsbF, PsbH, PsbI, PsbJ, PsbK, PsbL, PsbM, PsbT, PsbX, PsbY, PsbZ, Psb30/Ycf12, at least 3 peripheral proteins of the oxygen-evolving complex and a large number of cofactors. It forms dimeric complexes. It depends on heme b as a cofactor.

Its subcellular location is the plastid. It is found in the chloroplast thylakoid membrane. This b-type cytochrome is tightly associated with the reaction center of photosystem II (PSII). PSII is a light-driven water:plastoquinone oxidoreductase that uses light energy to abstract electrons from H(2)O, generating O(2) and a proton gradient subsequently used for ATP formation. It consists of a core antenna complex that captures photons, and an electron transfer chain that converts photonic excitation into a charge separation. In Piper cenocladum (Ant piper), this protein is Cytochrome b559 subunit alpha.